A 412-amino-acid polypeptide reads, in one-letter code: Serine hydroxymethyltransferase (412 aa).

(6S)-5,6,7,8-tetrahydrofolate-binding positions include leucine 117 and 121 to 123; that span reads GHL. N6-(pyridoxal phosphate)lysine is present on lysine 226. (6S)-5,6,7,8-tetrahydrofolate is bound by residues glutamate 242 and 350–352; that span reads SPF.

Belongs to the SHMT family. Homodimer. The cofactor is pyridoxal 5'-phosphate.

The protein localises to the cytoplasm. The enzyme catalyses (6R)-5,10-methylene-5,6,7,8-tetrahydrofolate + glycine + H2O = (6S)-5,6,7,8-tetrahydrofolate + L-serine. Its pathway is one-carbon metabolism; tetrahydrofolate interconversion. It functions in the pathway amino-acid biosynthesis; glycine biosynthesis; glycine from L-serine: step 1/1. Functionally, catalyzes the reversible interconversion of serine and glycine with tetrahydrofolate (THF) serving as the one-carbon carrier. Also exhibits THF-independent aldolase activity toward beta-hydroxyamino acids, producing glycine and aldehydes, via a retro-aldol mechanism. The sequence is that of Serine hydroxymethyltransferase from Methanosarcina mazei (strain ATCC BAA-159 / DSM 3647 / Goe1 / Go1 / JCM 11833 / OCM 88) (Methanosarcina frisia).